The chain runs to 151 residues: Prefoldin subunit alpha (151 aa).

Belongs to the prefoldin subunit alpha family. In terms of assembly, heterohexamer of two alpha and four beta subunits.

Its subcellular location is the cytoplasm. Molecular chaperone capable of stabilizing a range of proteins. Seems to fulfill an ATP-independent, HSP70-like function in archaeal de novo protein folding. The sequence is that of Prefoldin subunit alpha (pfdA) from Aeropyrum pernix (strain ATCC 700893 / DSM 11879 / JCM 9820 / NBRC 100138 / K1).